Consider the following 439-residue polypeptide: Homogentisate 1,2-dioxygenase (439 aa).

Residue histidine 289 is the Proton acceptor of the active site. Fe cation contacts are provided by histidine 332 and glutamate 338. The homogentisate site is built by tyrosine 347 and histidine 368. Histidine 368 contacts Fe cation.

It belongs to the homogentisate dioxygenase family. As to quaternary structure, hexamer; dimer of trimers. The cofactor is Fe cation.

The enzyme catalyses homogentisate + O2 = 4-maleylacetoacetate + H(+). Its pathway is amino-acid degradation; L-phenylalanine degradation; acetoacetate and fumarate from L-phenylalanine: step 4/6. In terms of biological role, involved in the catabolism of homogentisate (2,5-dihydroxyphenylacetate or 2,5-OH-PhAc), a central intermediate in the degradation of phenylalanine and tyrosine. Catalyzes the oxidative ring cleavage of the aromatic ring of homogentisate to yield maleylacetoacetate. The sequence is that of Homogentisate 1,2-dioxygenase from Xanthomonas euvesicatoria pv. vesicatoria (strain 85-10) (Xanthomonas campestris pv. vesicatoria).